The following is a 447-amino-acid chain: Beclin-2 (447 aa).

Positions 169–228 (EALHAELCAELSSLEQEEARLTQELEDLDGHHARVAAELRAAQAESKELYKQHEQHRVEY) form a coiled coil. The interval 186-256 (EARLTQELED…NQLTYALSQQ (71 aa)) is required for homodimer formation.

It belongs to the beclin family. Homodimer (via coiled-coil domain). Interacts (via coiled-coil domain) with ATG14 (via coiled-coil domain); this interaction is tighter than BECN2 self-association. Interacts with AMBRA1, UVRAG and PIK3C3/VPS34; these interactions are not disrupted by starvation. Does not interact with RUBCN. Interacts (via N-terminus) with GPRASP1/GASP1; the interaction is direct. In terms of tissue distribution, expressed in brain, skeletal muscle, placenta, thymus and uterus. Expressed at a lower level in liver, testis, stomach, and 17-day-old embryos.

The protein localises to the cytoplasm. In terms of biological role, involved in 2 distinct lysosomal degradation pathways: acts as a regulator of autophagy and as a regulator of G-protein coupled receptors turnover. Regulates degradation in lysosomes of a variety of G-protein coupled receptors via its interaction with GPRASP1/GASP1. The protein is Beclin-2 of Mus musculus (Mouse).